Reading from the N-terminus, the 211-residue chain is 3-demethoxyubiquinol 3-hydroxylase (211 aa).

Residues Glu-60, Glu-90, His-93, Glu-142, Glu-174, and His-177 each coordinate Fe cation.

This sequence belongs to the COQ7 family. Fe cation is required as a cofactor.

It localises to the cell membrane. The catalysed reaction is a 5-methoxy-2-methyl-3-(all-trans-polyprenyl)benzene-1,4-diol + AH2 + O2 = a 3-demethylubiquinol + A + H2O. The protein operates within cofactor biosynthesis; ubiquinone biosynthesis. Catalyzes the hydroxylation of 2-nonaprenyl-3-methyl-6-methoxy-1,4-benzoquinol during ubiquinone biosynthesis. The protein is 3-demethoxyubiquinol 3-hydroxylase of Acinetobacter baylyi (strain ATCC 33305 / BD413 / ADP1).